We begin with the raw amino-acid sequence, 37 residues long: MKVRASVKKLCRNCKVVKRQGVVRVICSDPKHKQRQG.

The protein belongs to the bacterial ribosomal protein bL36 family.

This Actinobacillus pleuropneumoniae serotype 5b (strain L20) protein is Large ribosomal subunit protein bL36A.